The primary structure comprises 1054 residues: Cell wall acid trehalase ARB_03719 (1054 aa).

Residues methionine 1–alanine 24 form the signal peptide. 7 N-linked (GlcNAc...) asparagine glycosylation sites follow: asparagine 138, asparagine 178, asparagine 183, asparagine 207, asparagine 239, asparagine 277, and asparagine 309. Tryptophan 450–aspartate 451 is a substrate binding site. Asparagine 495, asparagine 515, asparagine 572, and asparagine 580 each carry an N-linked (GlcNAc...) asparagine glycan. Catalysis depends on glutamate 586, which acts as the Proton donor. N-linked (GlcNAc...) asparagine glycosylation is found at asparagine 620 and asparagine 648. Substrate is bound at residue lysine 654 to glutamine 655. N-linked (GlcNAc...) asparagine glycosylation is found at asparagine 808 and asparagine 844. Residues proline 950–valine 974 form a disordered region. Positions alanine 962–valine 974 are enriched in low complexity. 3 N-linked (GlcNAc...) asparagine glycosylation sites follow: asparagine 1004, asparagine 1007, and asparagine 1039.

This sequence belongs to the glycosyl hydrolase 65 family.

Its subcellular location is the secreted. It localises to the cell wall. It carries out the reaction alpha,alpha-trehalose + H2O = alpha-D-glucose + beta-D-glucose. In terms of biological role, cell wall acid trehalase that catalyzes hydrolysis of the disaccharide trehalose and required for growth on trehalose as carbon source. Plays a role in virulence. The polypeptide is Cell wall acid trehalase ARB_03719 (Arthroderma benhamiae (strain ATCC MYA-4681 / CBS 112371) (Trichophyton mentagrophytes)).